The chain runs to 921 residues: AdoMet-dependent rRNA methyltransferase SPB1 (921 aa).

S-adenosyl-L-methionine is bound by residues glycine 58, tryptophan 60, aspartate 78, aspartate 94, and aspartate 119. The Proton acceptor role is filled by lysine 159. Positions 367–414 (VEEMDEDDQIDDELARLNEEAARKARKERRRKNELRQKKILKMQLQMT) form a coiled coil. Disordered stretches follow at residues 448-476 (ALIQ…DPET), 491-604 (EFKQ…KRSL), 635-713 (ELDE…GKQK), 814-835 (LEKA…EKEK), and 866-921 (RGLK…GPRN). Residues 491–522 (EFKQKQSERDAKFRAKQARLQDAKNDSWHGIK) are compositionally biased toward basic and acidic residues. Composition is skewed to acidic residues over residues 523-542 (DDEE…ESEG), 555-568 (ETFD…EEDE), 635-684 (ELDE…DDFE), and 697-708 (DEEWDLNGEDEE). Positions 796 to 835 (IKKVAEAKARKKMRTLRRLEKAQKKAETINENEDISEKEK) form a coiled coil. Residues 814-823 (LEKAQKKAET) are compositionally biased toward basic and acidic residues. Positions 868-879 (LKGRPKGTKGRY) are enriched in basic residues. A compositionally biased stretch (basic and acidic residues) spans 880–892 (KMVDPRMKKELRA).

Belongs to the class I-like SAM-binding methyltransferase superfamily. RNA methyltransferase RlmE family. SPB1 subfamily. Component of the nucleolar and nucleoplasmic pre-60S ribosomal particle.

It localises to the nucleus. It is found in the nucleolus. The catalysed reaction is a ribonucleotide in rRNA + S-adenosyl-L-methionine = a 2'-O-methylribonucleotide in rRNA + S-adenosyl-L-homocysteine + H(+). Its function is as follows. Required for proper assembly of pre-ribosomal particles during the biogenesis of the 60S ribosomal subunit. The protein is AdoMet-dependent rRNA methyltransferase SPB1 of Mycosarcoma maydis (Corn smut fungus).